The following is a 370-amino-acid chain: 3-dehydroquinate synthase (370 aa).

NAD(+)-binding positions include 112–116, 136–137, Lys-149, Lys-158, and 176–179; these read GVVGD, TS, and TLRT. Glu-191, His-254, and His-276 together coordinate Zn(2+).

It belongs to the sugar phosphate cyclases superfamily. Dehydroquinate synthase family. Co(2+) is required as a cofactor. Requires Zn(2+) as cofactor. NAD(+) serves as cofactor.

It localises to the cytoplasm. The enzyme catalyses 7-phospho-2-dehydro-3-deoxy-D-arabino-heptonate = 3-dehydroquinate + phosphate. It functions in the pathway metabolic intermediate biosynthesis; chorismate biosynthesis; chorismate from D-erythrose 4-phosphate and phosphoenolpyruvate: step 2/7. Catalyzes the conversion of 3-deoxy-D-arabino-heptulosonate 7-phosphate (DAHP) to dehydroquinate (DHQ). The sequence is that of 3-dehydroquinate synthase from Xanthomonas campestris pv. campestris (strain 8004).